The following is a 496-amino-acid chain: ATP synthase subunit beta, chloroplastic (496 aa).

Position 170–177 (170–177 (GGAGVGKT)) interacts with ATP.

The protein belongs to the ATPase alpha/beta chains family. In terms of assembly, F-type ATPases have 2 components, CF(1) - the catalytic core - and CF(0) - the membrane proton channel. CF(1) has five subunits: alpha(3), beta(3), gamma(1), delta(1), epsilon(1). CF(0) has four main subunits: a(1), b(1), b'(1) and c(9-12).

Its subcellular location is the plastid. The protein resides in the chloroplast thylakoid membrane. The catalysed reaction is ATP + H2O + 4 H(+)(in) = ADP + phosphate + 5 H(+)(out). Produces ATP from ADP in the presence of a proton gradient across the membrane. The catalytic sites are hosted primarily by the beta subunits. This is ATP synthase subunit beta, chloroplastic from Dioscorea elephantipes (Elephant's foot yam).